The primary structure comprises 488 residues: IQ domain-containing protein IQM1 (488 aa).

Residues 20–46 form a disordered region; sequence RTNSFKRDDTNRHQNSPKSTMERSLSF. Over residues 32-46 the composition is skewed to polar residues; that stretch reads HQNSPKSTMERSLSF. The IQ domain maps to 106 to 135; the sequence is LDAAATTLQKVYKSYRTRRNLADCAVVVEE. Disordered stretches follow at residues 377–403 and 448–472; these read SFKSTADEEEERKEVSEEVEIPSEKEE and SPRVSPANSYGPIPSPRPSPKVRVS. A compositionally biased stretch (basic and acidic residues) spans 388 to 403; it reads RKEVSEEVEIPSEKEE.

As to quaternary structure, interacts (via IQ domain) with CAM5. In terms of tissue distribution, highly expressed in leaf mesophyll cells. Expressed in roots, rosette and cauline leaves, stems, flowers and siliques.

It localises to the cytoplasm. The protein resides in the nucleus. Functionally, involved in the modulation of stomatal movement. Promotes stomatal opening. May play a role in the regulation of chitin signaling. May be involved in biotic and abiotic stress responses. The sequence is that of IQ domain-containing protein IQM1 from Arabidopsis thaliana (Mouse-ear cress).